Reading from the N-terminus, the 347-residue chain is Quinolinate synthase (347 aa).

Iminosuccinate is bound by residues H47 and S68. C113 lines the [4Fe-4S] cluster pocket. Iminosuccinate contacts are provided by residues Y139–N141 and S156. C200 is a binding site for [4Fe-4S] cluster. Iminosuccinate is bound by residues H226–E228 and T243. C297 is a binding site for [4Fe-4S] cluster.

This sequence belongs to the quinolinate synthase family. Type 1 subfamily. The cofactor is [4Fe-4S] cluster.

Its subcellular location is the cytoplasm. It carries out the reaction iminosuccinate + dihydroxyacetone phosphate = quinolinate + phosphate + 2 H2O + H(+). Its pathway is cofactor biosynthesis; NAD(+) biosynthesis; quinolinate from iminoaspartate: step 1/1. Catalyzes the condensation of iminoaspartate with dihydroxyacetone phosphate to form quinolinate. The sequence is that of Quinolinate synthase from Escherichia coli O157:H7.